The chain runs to 357 residues: 4-hydroxy-3-methylbut-2-en-1-yl diphosphate synthase (flavodoxin) (357 aa).

Residues C264, C267, C299, and E306 each contribute to the [4Fe-4S] cluster site.

The protein belongs to the IspG family. The cofactor is [4Fe-4S] cluster.

It carries out the reaction (2E)-4-hydroxy-3-methylbut-2-enyl diphosphate + oxidized [flavodoxin] + H2O + 2 H(+) = 2-C-methyl-D-erythritol 2,4-cyclic diphosphate + reduced [flavodoxin]. Its pathway is isoprenoid biosynthesis; isopentenyl diphosphate biosynthesis via DXP pathway; isopentenyl diphosphate from 1-deoxy-D-xylulose 5-phosphate: step 5/6. Its function is as follows. Converts 2C-methyl-D-erythritol 2,4-cyclodiphosphate (ME-2,4cPP) into 1-hydroxy-2-methyl-2-(E)-butenyl 4-diphosphate. The chain is 4-hydroxy-3-methylbut-2-en-1-yl diphosphate synthase (flavodoxin) from Campylobacter jejuni subsp. jejuni serotype O:23/36 (strain 81-176).